Consider the following 424-residue polypeptide: Enolase (424 aa).

Position 162 (Gln-162) interacts with (2R)-2-phosphoglycerate. Residue Glu-204 is the Proton donor of the active site. 3 residues coordinate Mg(2+): Asp-241, Glu-284, and Asp-311. Residues Lys-336, Arg-365, Ser-366, and Lys-387 each coordinate (2R)-2-phosphoglycerate. Lys-336 (proton acceptor) is an active-site residue.

Belongs to the enolase family. Requires Mg(2+) as cofactor.

It localises to the cytoplasm. The protein localises to the secreted. The protein resides in the cell surface. It catalyses the reaction (2R)-2-phosphoglycerate = phosphoenolpyruvate + H2O. The protein operates within carbohydrate degradation; glycolysis; pyruvate from D-glyceraldehyde 3-phosphate: step 4/5. Its function is as follows. Catalyzes the reversible conversion of 2-phosphoglycerate (2-PG) into phosphoenolpyruvate (PEP). It is essential for the degradation of carbohydrates via glycolysis. This Sinorhizobium fredii (strain NBRC 101917 / NGR234) protein is Enolase.